Reading from the N-terminus, the 482-residue chain is Abscisic acid 8'-hydroxylase 2 (482 aa).

The helical transmembrane segment at 20–40 (PALITLTIVVVVVVLLFKWWL) threads the bilayer. Residue cysteine 431 participates in heme binding.

It belongs to the cytochrome P450 family. Requires heme as cofactor. Mainly expressed in dry seeds. Lower expression in rosette leaves, flowers, siliques and stems. Not expressed in roots. Expressed in both endosperm and vascular tissues of embryo during the seed development and in cortex and endodermis in germinating embryo.

Its subcellular location is the membrane. It carries out the reaction 2-cis-(+)-abscisate + reduced [NADPH--hemoprotein reductase] + O2 = (+)-8'-hydroxyabscisate + oxidized [NADPH--hemoprotein reductase] + H2O + H(+). Its pathway is plant hormone degradation; abscisic acid degradation. Involved in the oxidative degradation of abscisic acid, but not in the isomerization of the produced 8'-hydroxyabscisic acid (8'-OH-ABA) to (-)-phaseic acid (PA). Involved in the control of seed dormancy and germination. The polypeptide is Abscisic acid 8'-hydroxylase 2 (CYP707A2) (Arabidopsis thaliana (Mouse-ear cress)).